The sequence spans 158 residues: Small ribosomal subunit protein uS7 (158 aa).

This sequence belongs to the universal ribosomal protein uS7 family. In terms of assembly, part of the 30S ribosomal subunit. Contacts proteins S9 and S11.

Functionally, one of the primary rRNA binding proteins, it binds directly to 16S rRNA where it nucleates assembly of the head domain of the 30S subunit. Is located at the subunit interface close to the decoding center, probably blocks exit of the E-site tRNA. This chain is Small ribosomal subunit protein uS7, found in Bacteroides fragilis (strain YCH46).